The following is a 101-amino-acid chain: Putative defensin-like protein 253 (101 aa).

A signal peptide spans 1–23 (MRFASLFVVYCTFMFLDISHVKC). 4 disulfide bridges follow: Cys31/Cys84, Cys41/Cys66, Cys49/Cys76, and Cys64/Cys78.

This sequence belongs to the DEFL family.

It localises to the secreted. In Arabidopsis thaliana (Mouse-ear cress), this protein is Putative defensin-like protein 253 (SCRL15).